Consider the following 126-residue polypeptide: Fluoride-specific ion channel FluC (126 aa).

Helical transmembrane passes span 7–27 (LWLA…VLLL), 36–56 (FPAA…LTLA), 74–94 (GVLG…GLLL), and 98–118 (GGLA…AAVA). Na(+) is bound by residues Gly77 and Thr80.

The protein belongs to the fluoride channel Fluc/FEX (TC 1.A.43) family.

The protein resides in the cell membrane. It carries out the reaction fluoride(in) = fluoride(out). Its activity is regulated as follows. Na(+) is not transported, but it plays an essential structural role and its presence is essential for fluoride channel function. Its function is as follows. Fluoride-specific ion channel. Important for reducing fluoride concentration in the cell, thus reducing its toxicity. The protein is Fluoride-specific ion channel FluC of Deinococcus radiodurans (strain ATCC 13939 / DSM 20539 / JCM 16871 / CCUG 27074 / LMG 4051 / NBRC 15346 / NCIMB 9279 / VKM B-1422 / R1).